Here is a 248-residue protein sequence, read N- to C-terminus: MKLAVDTHTHTYASGHAYSTLIENARAAKQNGLTLFCTTDHAESMPGAPHYWFFSNQRILPRFLEGVGVIRGVEANILNTQGEIDLHSSVDHNLDWVIGSFHEPVFHPADKAAHTQALIETIKGGRVDALGHLGNPHFDFDFEQVIACAKTHNVAIEINNSTLKGHSRVGSIDRCYEIARVAKSLDAYITTGSDAHFCLDIGGLSLASQLIDEVGINPQRVITHTARQFLDFLELRGRQPIEEFAGLL.

Zn(2+) is bound by residues His-8, His-10, His-16, His-41, Glu-74, His-102, His-132, Asp-194, and His-196.

This sequence belongs to the PHP family. Zn(2+) is required as a cofactor.

This is Probable phosphatase VCM66_A0854 from Vibrio cholerae serotype O1 (strain M66-2).